The sequence spans 134 residues: Profilin-2 (134 aa).

An intrachain disulfide couples Cys13 to Cys118. The short motif at 84 to 100 (AVIRGKKGSGGITIKKT) is the Involved in PIP2 interaction element. Phosphothreonine is present on Thr114.

This sequence belongs to the profilin family. In terms of assembly, occurs in many kinds of cells as a complex with monomeric actin in a 1:1 ratio. In terms of processing, phosphorylated by MAP kinases.

The protein resides in the cytoplasm. It localises to the cytoskeleton. In terms of biological role, binds to actin and affects the structure of the cytoskeleton. At high concentrations, profilin prevents the polymerization of actin, whereas it enhances it at low concentrations. This is Profilin-2 from Olea europaea (Common olive).